Consider the following 122-residue polypeptide: Large ribosomal subunit protein uL14 (122 aa).

The protein belongs to the universal ribosomal protein uL14 family. Part of the 50S ribosomal subunit. Forms a cluster with proteins L3 and L19. In the 70S ribosome, L14 and L19 interact and together make contacts with the 16S rRNA in bridges B5 and B8.

Binds to 23S rRNA. Forms part of two intersubunit bridges in the 70S ribosome. This Nitrobacter winogradskyi (strain ATCC 25391 / DSM 10237 / CIP 104748 / NCIMB 11846 / Nb-255) protein is Large ribosomal subunit protein uL14.